Here is a 251-residue protein sequence, read N- to C-terminus: uncharacterized protein (251 aa).

One can recognise a Response regulatory domain in the interval 3 to 118 (KVIICDDERI…QLEHILDILV (116 aa)). 4-aspartylphosphate is present on Asp55. Residues 152–249 (NQILSQIKQH…HMSPSDYNKQ (98 aa)) form the HTH araC/xylS-type domain. DNA-binding regions (H-T-H motif) lie at residues 169 to 190 (LDLI…KEHV) and 216 to 239 (HYEI…KKYL).

Post-translationally, phosphorylated by SERP2405.

Its subcellular location is the cytoplasm. Its function is as follows. Probable member of the two-component regulatory system SERP2405/SERP2406. This is an uncharacterized protein from Staphylococcus epidermidis (strain ATCC 35984 / DSM 28319 / BCRC 17069 / CCUG 31568 / BM 3577 / RP62A).